We begin with the raw amino-acid sequence, 263 residues long: Polyamine aminopropyltransferase (263 aa).

The PABS domain occupies 1–221 (MARHPYRRLR…AVMAFQSSPK (221 aa)). S-methyl-5'-thioadenosine is bound by residues Asp98 and 126–127 (DG). The active-site Proton acceptor is the Asp144.

It belongs to the spermidine/spermine synthase family. As to quaternary structure, homodimer or homotetramer.

It localises to the cytoplasm. The catalysed reaction is S-adenosyl 3-(methylsulfanyl)propylamine + putrescine = S-methyl-5'-thioadenosine + spermidine + H(+). It participates in amine and polyamine biosynthesis; spermidine biosynthesis; spermidine from putrescine: step 1/1. Its function is as follows. Catalyzes the irreversible transfer of a propylamine group from the amino donor S-adenosylmethioninamine (decarboxy-AdoMet) to putrescine (1,4-diaminobutane) to yield spermidine. This Neisseria meningitidis serogroup A / serotype 4A (strain DSM 15465 / Z2491) protein is Polyamine aminopropyltransferase.